The following is a 126-amino-acid chain: Methylglyoxal synthase (126 aa).

Positions 1-126 (MAGGKCIALI…AERLIKTLNH (126 aa)) constitute an MGS-like domain. Residues H12, K16, 38-41 (TGTT), and 59-60 (SG) contribute to the substrate site. Catalysis depends on D65, which acts as the Proton donor/acceptor. H92 contributes to the substrate binding site.

The protein belongs to the methylglyoxal synthase family.

It catalyses the reaction dihydroxyacetone phosphate = methylglyoxal + phosphate. Functionally, catalyzes the formation of methylglyoxal from dihydroxyacetone phosphate. This Rhizobium rhizogenes (strain K84 / ATCC BAA-868) (Agrobacterium radiobacter) protein is Methylglyoxal synthase.